The following is a 178-amino-acid chain: Small ribosomal subunit protein uS4 (178 aa).

Residues 104-166 (RRLQTLVYRK…PNSPMALENH (63 aa)) form the S4 RNA-binding domain.

It belongs to the universal ribosomal protein uS4 family. In terms of assembly, part of the 30S ribosomal subunit. Contacts protein S5. The interaction surface between S4 and S5 is involved in control of translational fidelity.

One of the primary rRNA binding proteins, it binds directly to 16S rRNA where it nucleates assembly of the body of the 30S subunit. In terms of biological role, with S5 and S12 plays an important role in translational accuracy. This is Small ribosomal subunit protein uS4 from Methanococcus vannielii (strain ATCC 35089 / DSM 1224 / JCM 13029 / OCM 148 / SB).